Reading from the N-terminus, the 283-residue chain is Bis(5'-nucleosyl)-tetraphosphatase, symmetrical (283 aa).

The protein belongs to the Ap4A hydrolase family.

It carries out the reaction P(1),P(4)-bis(5'-adenosyl) tetraphosphate + H2O = 2 ADP + 2 H(+). Hydrolyzes diadenosine 5',5'''-P1,P4-tetraphosphate to yield ADP. The sequence is that of Bis(5'-nucleosyl)-tetraphosphatase, symmetrical from Cronobacter sakazakii (strain ATCC BAA-894) (Enterobacter sakazakii).